The primary structure comprises 236 residues: Purine nucleoside phosphorylase DeoD-type (236 aa).

An a purine D-ribonucleoside-binding site is contributed by H5. Residues G21, R25, R44, and 88–91 (RVGT) each bind phosphate. A purine D-ribonucleoside contacts are provided by residues 180 to 182 (EME) and 204 to 205 (SD). The active-site Proton donor is D205.

This sequence belongs to the PNP/UDP phosphorylase family. In terms of assembly, homohexamer; trimer of homodimers.

The catalysed reaction is a purine D-ribonucleoside + phosphate = a purine nucleobase + alpha-D-ribose 1-phosphate. The enzyme catalyses a purine 2'-deoxy-D-ribonucleoside + phosphate = a purine nucleobase + 2-deoxy-alpha-D-ribose 1-phosphate. Its function is as follows. Catalyzes the reversible phosphorolytic breakdown of the N-glycosidic bond in the beta-(deoxy)ribonucleoside molecules, with the formation of the corresponding free purine bases and pentose-1-phosphate. The chain is Purine nucleoside phosphorylase DeoD-type from Shewanella sp. (strain MR-4).